The chain runs to 108 residues: MSQESNDDSLGIDKLSVDYDYLLYKIADYVSSIEFQTNQICKRQNELITKDIVNGIVDENIKHFREILTKCEKLENYFDMLDQINMITENFKTRLAQVARDYKELQKP.

It belongs to the BLOC1S4 family. As to quaternary structure, component of the biogenesis of lysosome-related organelles complex-1 (BLOC-1).

The protein localises to the cytoplasm. Component of the biogenesis of lysosome-related organelles complex-1 (BLOC-1), a complex that is involved in endosomal cargo sorting. The chain is Biogenesis of lysosome-related organelles complex 1 subunit CNL1 (CLN1) from Zygosaccharomyces rouxii (strain ATCC 2623 / CBS 732 / NBRC 1130 / NCYC 568 / NRRL Y-229).